We begin with the raw amino-acid sequence, 145 residues long: D-aminoacyl-tRNA deacylase (145 aa).

The Gly-cisPro motif, important for rejection of L-amino acids signature appears at 137-138 (GP).

Belongs to the DTD family. Homodimer.

Its subcellular location is the cytoplasm. The catalysed reaction is glycyl-tRNA(Ala) + H2O = tRNA(Ala) + glycine + H(+). The enzyme catalyses a D-aminoacyl-tRNA + H2O = a tRNA + a D-alpha-amino acid + H(+). An aminoacyl-tRNA editing enzyme that deacylates mischarged D-aminoacyl-tRNAs. Also deacylates mischarged glycyl-tRNA(Ala), protecting cells against glycine mischarging by AlaRS. Acts via tRNA-based rather than protein-based catalysis; rejects L-amino acids rather than detecting D-amino acids in the active site. By recycling D-aminoacyl-tRNA to D-amino acids and free tRNA molecules, this enzyme counteracts the toxicity associated with the formation of D-aminoacyl-tRNA entities in vivo and helps enforce protein L-homochirality. The polypeptide is D-aminoacyl-tRNA deacylase (Shewanella frigidimarina (strain NCIMB 400)).